The sequence spans 1334 residues: CRISPR-associated endonuclease Cas9 (1334 aa).

D10 acts as the For RuvC-like nuclease domain in catalysis. Mn(2+)-binding residues include D10, E765, and E769. The HNH Cas9-type domain occupies 773 to 924 (TGKGKNNSRP…DKARFIHRQL (152 aa)). Catalysis depends on H843, which acts as the Proton acceptor for HNH nuclease domain. Residue H986 participates in Mn(2+) binding.

Belongs to the CRISPR-associated protein Cas9 family. Subtype II-A subfamily. In terms of assembly, monomer. Binds crRNA and tracrRNA. Requires Mg(2+) as cofactor.

Its function is as follows. CRISPR (clustered regularly interspaced short palindromic repeat) is an adaptive immune system that provides protection against mobile genetic elements (viruses, transposable elements and conjugative plasmids). CRISPR clusters contain spacers, sequences complementary to antecedent mobile elements, and target invading nucleic acids. CRISPR clusters are transcribed and processed into CRISPR RNA (crRNA). In type II CRISPR systems correct processing of pre-crRNA requires a trans-encoded small RNA (tracrRNA), endogenous ribonuclease 3 (rnc) and this protein. The tracrRNA serves as a guide for ribonuclease 3-aided processing of pre-crRNA. Subsequently Cas9/crRNA/tracrRNA endonucleolytically cleaves linear or circular dsDNA target complementary to the spacer; Cas9 is inactive in the absence of the 2 guide RNAs (gRNA). Cas9 recognizes the protospacer adjacent motif (PAM) in the CRISPR repeat sequences to help distinguish self versus nonself, as targets within the bacterial CRISPR locus do not have PAMs. PAM recognition is also required for catalytic activity. The polypeptide is CRISPR-associated endonuclease Cas9 (Listeria innocua serovar 6a (strain ATCC BAA-680 / CLIP 11262)).